Consider the following 420-residue polypeptide: O-methyltransferase penK (420 aa).

Aspartate 285 provides a ligand contact to S-adenosyl-L-methionine. Histidine 325 serves as the catalytic Proton acceptor.

Belongs to the class I-like SAM-binding methyltransferase superfamily. Cation-independent O-methyltransferase family.

It functions in the pathway secondary metabolite biosynthesis. It participates in alkaloid biosynthesis. Its pathway is mycotoxin biosynthesis. Its function is as follows. O-methyltransferase; part of the gene cluster that mediates the biosynthesis of penigequinolones, potent insecticidal alkaloids that contain a highly modified 10-carbon prenyl group. The first stage is catalyzed by the nonribosomal peptide synthetase penN that condenses anthranilic acid and O-methyl-L-tyrosine to produce 4'-methoxycyclopeptin. 4'-methoxycyclopeptin is then converted to 4'-methoxydehydrocyclopeptin by the ketoglutarate-dependent dioxygenase penM through dehydrogenation to form a double bond between C-alpha and C-beta of the O-methyltyrosine side chain. PenM also converts its first product methoxydehydrocyclopeptin to 4'-methoxycyclopenin. The following conversion of 4'methoxycyclopenin into 4'-methoxyviridicatin is catalyzed by the cyclopenase penL. 4'-methoxyviridicatin is the precursor of quinolone natural products, and is further converted to quinolinone B. The prenyltransferase penI then catalyzes the canonical Friedel-Crafts alkylation of quinolinone B with dimethylallyl cation to yield dimethylallyl quinolone, which is subjected to FAD-dependent dehydrogenation by the FAD-linked oxidoreductase penH to yield conjugated aryl diene. The delta(3') double bond then serves as the site of the second alkylation with DMAPP catalyzed by the prenyltransferase penG to yield a carbenium ion intermediate, which can be attacked by H(2)O to yield a styrenyl quinolone containing a C3'-hydroxyprenyl chain, or undergo cyclization to yield yaequinolones J1 and J2. The conversion of the styrenyl quinolone into the tetrahydrofuran-containing yaequinolone C is performed by the FAD-dependent monooxygenase penE and involves epoxidation of the terminal C7'-C8' olefin, followed by epoxide ring opening initiated by the C3' hydroxyl group. The predicted cysteine hydrolase penJ acts as an epoxide hydrolase that enhances the rate of the 5-exo-tet cyclization step, increasing the yield of yaequinolone C. PenF catalyzes the cationic rearrangement of the epoxide formed by penE (before ring opening to produce yaequinolone C) into yaequinolone D. Finally, the short-chain dehydrogenase/reductase (SDR)-like reductase penD, catalyzes both the dehydration of yaequinolone D and the reduction of the resulting oxonium to yield penigequinolone. The protein is O-methyltransferase penK of Penicillium thymicola.